The sequence spans 315 residues: Glucokinase-like protein CC_3167 (315 aa).

Belongs to the bacterial glucokinase family.

In Caulobacter vibrioides (strain ATCC 19089 / CIP 103742 / CB 15) (Caulobacter crescentus), this protein is Glucokinase-like protein CC_3167.